We begin with the raw amino-acid sequence, 330 residues long: MQGSVTEFLKPRLVDIEQISSTHAKVTLEPLERGFGHTLGNALRRILLSSMPGCAVTEVEIEGVLHEYSTKEGVQEDILEILLNLKGLAVRVAEGKDEVFITLNKSGSGPVVAGDITHDGDVEIANPEHVICHLTDDNAEIAMRIKVERGRGYVPASARIHNEEDERPIGRLLVDATYSPVDKIAYAVEAARVEQRTDLDKLVIDMETNGTLEPEEAIRRAATILAEQLDAFVDLRDVRVPEEKEEKPEFDPILLRPVDDLELTVRSANCLKAEAIHYIGDLVQRTEVELLKTPNLGKKSLTEIKDVLASRGLSLGMRLENWPPASIAED.

The interval M1–R236 is alpha N-terminal domain (alpha-NTD). Residues F250–D330 are alpha C-terminal domain (alpha-CTD).

It belongs to the RNA polymerase alpha chain family. Homodimer. The RNAP catalytic core consists of 2 alpha, 1 beta, 1 beta' and 1 omega subunit. When a sigma factor is associated with the core the holoenzyme is formed, which can initiate transcription.

The enzyme catalyses RNA(n) + a ribonucleoside 5'-triphosphate = RNA(n+1) + diphosphate. In terms of biological role, DNA-dependent RNA polymerase catalyzes the transcription of DNA into RNA using the four ribonucleoside triphosphates as substrates. The chain is DNA-directed RNA polymerase subunit alpha from Vibrio parahaemolyticus serotype O3:K6 (strain RIMD 2210633).